The primary structure comprises 34 residues: Photosystem II reaction center protein M (34 aa).

Residues 5–25 (ILAFIATALFILVPTSFLLII) form a helical membrane-spanning segment.

The protein belongs to the PsbM family. In terms of assembly, PSII is composed of 1 copy each of membrane proteins PsbA, PsbB, PsbC, PsbD, PsbE, PsbF, PsbH, PsbI, PsbJ, PsbK, PsbL, PsbM, PsbT, PsbX, PsbY, PsbZ, Psb30/Ycf12, at least 3 peripheral proteins of the oxygen-evolving complex and a large number of cofactors. It forms dimeric complexes.

It localises to the plastid. The protein resides in the chloroplast thylakoid membrane. One of the components of the core complex of photosystem II (PSII). PSII is a light-driven water:plastoquinone oxidoreductase that uses light energy to abstract electrons from H(2)O, generating O(2) and a proton gradient subsequently used for ATP formation. It consists of a core antenna complex that captures photons, and an electron transfer chain that converts photonic excitation into a charge separation. This subunit is found at the monomer-monomer interface. The protein is Photosystem II reaction center protein M of Triticum aestivum (Wheat).